Consider the following 508-residue polypeptide: Mevalonate kinase ERG12 (508 aa).

The interval 1 to 46 (MPPSNPAMVNGLNGSHANGNGNGHNHISDSGSETSGESSNGSGRRR) is disordered. The span at 10–42 (NGLNGSHANGNGNGHNHISDSGSETSGESSNGS) shows a compositional bias: low complexity. ATP-binding positions include lysine 68, serine 200, and 205 to 211 (GAGLGSS). Mg(2+) contacts are provided by serine 211 and glutamate 256. Aspartate 267 acts as the Proton acceptor in catalysis.

This sequence belongs to the GHMP kinase family. Mevalonate kinase subfamily. Homodimer. Requires Mg(2+) as cofactor.

The protein localises to the cytoplasm. Its subcellular location is the cytosol. It catalyses the reaction (R)-mevalonate + ATP = (R)-5-phosphomevalonate + ADP + H(+). The protein operates within isoprenoid biosynthesis; isopentenyl diphosphate biosynthesis via mevalonate pathway; isopentenyl diphosphate from (R)-mevalonate: step 1/3. Functionally, mevalonate kinase; part of the second module of ergosterol biosynthesis pathway that includes the middle steps of the pathway. ERG12 converts mevalonate into 5-phosphomevalonate. The second module is carried out in the vacuole and involves the formation of farnesyl diphosphate, which is also an important intermediate in the biosynthesis of ubiquinone, dolichol, heme and prenylated proteins. Activity by the mevalonate kinase ERG12 (FG05912) first converts mevalonate into 5-phosphomevalonate. 5-phosphomevalonate is then further converted to 5-diphosphomevalonate by the phosphomevalonate kinase ERG8 (FG09764). The diphosphomevalonate decarboxylase ERG19 (FG10424) then produces isopentenyl diphosphate. The isopentenyl-diphosphate delta-isomerase IDI1 (FG09722) then catalyzes the 1,3-allylic rearrangement of the homoallylic substrate isopentenyl (IPP) to its highly electrophilic allylic isomer, dimethylallyl diphosphate (DMAPP). Finally the farnesyl diphosphate synthase ERG20 (FG06784) catalyzes the sequential condensation of isopentenyl pyrophosphate with dimethylallyl pyrophosphate, and then with the resultant geranylpyrophosphate to the ultimate product farnesyl pyrophosphate. This is Mevalonate kinase ERG12 from Gibberella zeae (strain ATCC MYA-4620 / CBS 123657 / FGSC 9075 / NRRL 31084 / PH-1) (Wheat head blight fungus).